The sequence spans 299 residues: tRNA dimethylallyltransferase (299 aa).

13 to 20 (GPTASGKT) is a binding site for ATP. Residue 15 to 20 (TASGKT) participates in substrate binding. The interaction with substrate tRNA stretch occupies residues 38-41 (DSRQ).

This sequence belongs to the IPP transferase family. Monomer. Mg(2+) serves as cofactor.

The catalysed reaction is adenosine(37) in tRNA + dimethylallyl diphosphate = N(6)-dimethylallyladenosine(37) in tRNA + diphosphate. Catalyzes the transfer of a dimethylallyl group onto the adenine at position 37 in tRNAs that read codons beginning with uridine, leading to the formation of N6-(dimethylallyl)adenosine (i(6)A). The chain is tRNA dimethylallyltransferase from Prochlorococcus marinus (strain AS9601).